The sequence spans 179 residues: Ribosome maturation factor RimM (179 aa).

In terms of domain architecture, PRC barrel spans 97–170 (DGELSWNFFV…LITVELPEGL (74 aa)).

It belongs to the RimM family. Binds ribosomal protein uS19.

It localises to the cytoplasm. Its function is as follows. An accessory protein needed during the final step in the assembly of 30S ribosomal subunit, possibly for assembly of the head region. Essential for efficient processing of 16S rRNA. May be needed both before and after RbfA during the maturation of 16S rRNA. It has affinity for free ribosomal 30S subunits but not for 70S ribosomes. In Bacteroides thetaiotaomicron (strain ATCC 29148 / DSM 2079 / JCM 5827 / CCUG 10774 / NCTC 10582 / VPI-5482 / E50), this protein is Ribosome maturation factor RimM.